A 379-amino-acid polypeptide reads, in one-letter code: Succinyl-diaminopimelate desuccinylase (379 aa).

A Zn(2+)-binding site is contributed by His70. Asp72 is an active-site residue. Residue Asp103 coordinates Zn(2+). Catalysis depends on Glu137, which acts as the Proton acceptor. Zn(2+) contacts are provided by Glu138, Glu166, and His352.

Belongs to the peptidase M20A family. DapE subfamily. Homodimer. The cofactor is Zn(2+). It depends on Co(2+) as a cofactor.

The enzyme catalyses N-succinyl-(2S,6S)-2,6-diaminopimelate + H2O = (2S,6S)-2,6-diaminopimelate + succinate. It participates in amino-acid biosynthesis; L-lysine biosynthesis via DAP pathway; LL-2,6-diaminopimelate from (S)-tetrahydrodipicolinate (succinylase route): step 3/3. Catalyzes the hydrolysis of N-succinyl-L,L-diaminopimelic acid (SDAP), forming succinate and LL-2,6-diaminopimelate (DAP), an intermediate involved in the bacterial biosynthesis of lysine and meso-diaminopimelic acid, an essential component of bacterial cell walls. In Burkholderia lata (strain ATCC 17760 / DSM 23089 / LMG 22485 / NCIMB 9086 / R18194 / 383), this protein is Succinyl-diaminopimelate desuccinylase.